The chain runs to 839 residues: LPS-assembly protein LptD (839 aa).

An N-terminal signal peptide occupies residues 1–21 (MAIGITACVLSLINYQGLAYS).

Belongs to the LptD family. In terms of assembly, component of the lipopolysaccharide transport and assembly complex. Interacts with LptE and LptA.

Its subcellular location is the cell outer membrane. Its function is as follows. Together with LptE, is involved in the assembly of lipopolysaccharide (LPS) at the surface of the outer membrane. The chain is LPS-assembly protein LptD from Legionella pneumophila (strain Paris).